The chain runs to 486 residues: NADH-quinone oxidoreductase subunit N (486 aa).

14 consecutive transmembrane segments (helical) span residues 11-31 (ALPEIVLLIAVSAILIIDLFV), 44-64 (MLALVATGAATLAAWLPYPVL), 74-94 (PIASVAKLGLVVATGVAMIYA), 103-123 (FLKGELFTLMLFALLGMCVMV), 128-148 (MLTLYIGLELLSLALYALIAL), 163-183 (FVLGALASGLLLYGVSMVYGG), 206-226 (VSLGLVFIVAGLAFKLGAVPF), 238-258 (PTAVTLFVGSAPKLAAFVFVI), 267-287 (PAAVAWQPMLILLAIASLVVG), 300-320 (MLAYSTISHMGFMLIGILAAT), 328-348 (MFYAITYMLMALAGFGVLLAL), 371-391 (YALLVLLVMFSMAGIPPLVGF), 404-424 (VGLTWLAVVGVVMSLIGAFYY), and 452-472 (LVLGVNGLVLLGLGILPNGLY).

Belongs to the complex I subunit 2 family. In terms of assembly, NDH-1 is composed of 14 different subunits. Subunits NuoA, H, J, K, L, M, N constitute the membrane sector of the complex.

It localises to the cell inner membrane. It carries out the reaction a quinone + NADH + 5 H(+)(in) = a quinol + NAD(+) + 4 H(+)(out). NDH-1 shuttles electrons from NADH, via FMN and iron-sulfur (Fe-S) centers, to quinones in the respiratory chain. The immediate electron acceptor for the enzyme in this species is believed to be ubiquinone. Couples the redox reaction to proton translocation (for every two electrons transferred, four hydrogen ions are translocated across the cytoplasmic membrane), and thus conserves the redox energy in a proton gradient. The sequence is that of NADH-quinone oxidoreductase subunit N from Laribacter hongkongensis (strain HLHK9).